Reading from the N-terminus, the 697-residue chain is MPDLLIELFSEEIPARMQARAREDLKKLVTDGLVEAGLTYASAGAFSTPRRLVLSVEGLSAESPTLREERKGPKADAPAAAIEGFLRSTGLTRDRLETREDKKGAVLFAVVEKPGRPAPEIVAEVLERTIRTFPWPKSMRWGTGSLRWVRPLQSILCLLSDEGGAEVVPMTLDGLTAGNSTEGHRFMAPARFAVSGFEDYRAKLGRAFVMLDASEREQAIWHEATTQAFAQGLEVVPDAALLSEVAGLVEWPVVLMGAIGEDFLGLPPEVLQTSMREHQKFFSVTNPATGRIEKFVTVANRETADHGETILKGNGKVLSARLSDARFFWENDLRTVKTAGLEGMAEGLKQVTFHNRLGSQADRIARIEALAREIAPLVGASPDLAAEAARVAKADLQSAMVGEFPELQGTMGSYYARAAGLPEAVAQACKAHYQPLGPSDAVPTDPVSVAVALADKIDTLAGFWRIGEKPTGSKDPFALRRAALGVIRLLLTNNSRAGLMGIMLPAMNRHLEPFDTSDFTPYERELLSFFHDRLKVHLREQGIRHDVIDACLAMPGNDDLTLLVKRAEALSAFLKTDDGTNLLQGFKRANNILTQAEAKDGVEYSFGADPKFAETDAERALFAALETAEAAIGPALQAEDFAAAMSAMAALRAPIDAFFETVQVNADNAVLRRNRLNMLHSIRATCARVADLTRIEG.

It belongs to the class-II aminoacyl-tRNA synthetase family. In terms of assembly, tetramer of two alpha and two beta subunits.

The protein localises to the cytoplasm. It carries out the reaction tRNA(Gly) + glycine + ATP = glycyl-tRNA(Gly) + AMP + diphosphate. The sequence is that of Glycine--tRNA ligase beta subunit from Cereibacter sphaeroides (strain ATCC 17029 / ATH 2.4.9) (Rhodobacter sphaeroides).